Reading from the N-terminus, the 138-residue chain is Ribulose bisphosphate carboxylase small subunit (138 aa).

The protein belongs to the RuBisCO small chain family. In terms of assembly, heterohexadecamer of 8 large and 8 small subunits.

It localises to the plastid. The protein localises to the chloroplast. Functionally, ruBisCO catalyzes two reactions: the carboxylation of D-ribulose 1,5-bisphosphate, the primary event in carbon dioxide fixation, as well as the oxidative fragmentation of the pentose substrate in the photorespiration process. Both reactions occur simultaneously and in competition at the same active site. Although the small subunit is not catalytic it is essential for maximal activity. The chain is Ribulose bisphosphate carboxylase small subunit from Cyanidioschyzon merolae (strain NIES-3377 / 10D) (Unicellular red alga).